The following is a 513-amino-acid chain: Microcin J25-processing protein McjC (513 aa).

An Asparagine synthetase domain is found at 176–436; that stretch reads STIDSIIDNI…FGSDIFWKKT (261 aa).

The protein resides in the cytoplasm. Its function is as follows. Along with McjB, necessary and sufficient to process the inactive microcin J25 (McjA) precursor into the active peptide. May be involved in the formation of the amide bond between Gly-38 and Glu-53 of McjA. The polypeptide is Microcin J25-processing protein McjC (mcjC) (Escherichia coli).